The primary structure comprises 94 residues: Acylphosphatase (94 aa).

One can recognise an Acylphosphatase-like domain in the interval 6-92; sequence RVHVWIRGRV…EGLPTFEIRP (87 aa). Active-site residues include Arg21 and Asn39.

The protein belongs to the acylphosphatase family.

The enzyme catalyses an acyl phosphate + H2O = a carboxylate + phosphate + H(+). The sequence is that of Acylphosphatase (acyP) from Synechococcus sp. (strain JA-2-3B'a(2-13)) (Cyanobacteria bacterium Yellowstone B-Prime).